The chain runs to 219 residues: Transcriptional regulatory protein QseB (219 aa).

The 115-residue stretch at 2-116 folds into the Response regulatory domain; the sequence is RILLVEDDTL…EVAARLEALV (115 aa). A 4-aspartylphosphate modification is found at Asp-51. The ompR/PhoB-type DNA-binding region spans 124–218; the sequence is SSELRHGQVT…VHGIGYTLGD (95 aa).

Post-translationally, phosphorylated by QseC.

It localises to the cytoplasm. In terms of biological role, member of a two-component regulatory system QseB/QseC. Activates the flagella regulon by activating transcription of flhDC. This is Transcriptional regulatory protein QseB (qseB) from Salmonella typhimurium (strain LT2 / SGSC1412 / ATCC 700720).